Here is a 214-residue protein sequence, read N- to C-terminus: NAD(P)H-quinone oxidoreductase subunit 5, chloroplastic (214 aa).

2 consecutive transmembrane segments (helical) span residues 84 to 104 (LFPL…GIPF) and 152 to 172 (SLAI…YSFF).

It belongs to the complex I subunit 5 family. In terms of assembly, NDH is composed of at least 16 different subunits, 5 of which are encoded in the nucleus.

The protein resides in the plastid. It localises to the chloroplast thylakoid membrane. The enzyme catalyses a plastoquinone + NADH + (n+1) H(+)(in) = a plastoquinol + NAD(+) + n H(+)(out). The catalysed reaction is a plastoquinone + NADPH + (n+1) H(+)(in) = a plastoquinol + NADP(+) + n H(+)(out). NDH shuttles electrons from NAD(P)H:plastoquinone, via FMN and iron-sulfur (Fe-S) centers, to quinones in the photosynthetic chain and possibly in a chloroplast respiratory chain. The immediate electron acceptor for the enzyme in this species is believed to be plastoquinone. Couples the redox reaction to proton translocation, and thus conserves the redox energy in a proton gradient. This is NAD(P)H-quinone oxidoreductase subunit 5, chloroplastic (ndhF) from Brachypodium pinnatum (Tor grass).